The primary structure comprises 413 residues: 3-oxo-tetronate kinase (413 aa).

ATP contacts are provided by residues Ser254, 354-357, and Gly397; that span reads GGET.

Belongs to the four-carbon acid sugar kinase family.

It carries out the reaction 3-dehydro-L-erythronate + ATP = 3-dehydro-4-O-phospho-L-erythronate + ADP + H(+). It catalyses the reaction 3-dehydro-D-erythronate + ATP = 3-dehydro-4-O-phospho-D-erythronate + ADP + H(+). Catalyzes the ATP-dependent phosphorylation of 3-oxo-tetronate to 3-oxo-tetronate 4-phosphate. The protein is 3-oxo-tetronate kinase of Haemophilus influenzae (strain ATCC 51907 / DSM 11121 / KW20 / Rd).